A 361-amino-acid polypeptide reads, in one-letter code: Glucose 1-dehydrogenase (361 aa).

C41 is a Zn(2+) binding site. T43 provides a ligand contact to substrate. Positions 68 and 69 each coordinate Zn(2+). Positions 119, 156, and 160 each coordinate substrate. E156 contacts Zn(2+). NADP(+) is bound by residues 216–218, 275–277, 304–306, and K349; these read NRH, FGT, and SVD. Position 306 (D306) interacts with substrate.

It belongs to the zinc-containing alcohol dehydrogenase family. Glucose 1-dehydrogenase subfamily. As to quaternary structure, homotetramer. Zn(2+) is required as a cofactor.

It catalyses the reaction D-glucose + NAD(+) = D-glucono-1,5-lactone + NADH + H(+). It carries out the reaction D-glucose + NADP(+) = D-glucono-1,5-lactone + NADPH + H(+). The enzyme catalyses D-galactose + NAD(+) = D-galactono-1,4-lactone + NADH + H(+). The catalysed reaction is D-galactose + NADP(+) = D-galactono-1,5-lactone + NADPH + H(+). Its function is as follows. Catalyzes the NAD(P)(+)-dependent oxidation of D-glucose to D-gluconate via gluconolactone. Is also significantly active with galactose as substrate, but not with mannose or glucose 6-phosphate. Can utilize both NAD(+) and NADP(+) as electron acceptor, with a marked preference for NADP(+). Physiologically, may be involved in the degradation of both glucose and galactose through a non-phosphorylative variant of the Entner-Doudoroff pathway. This is Glucose 1-dehydrogenase from Thermoplasma acidophilum (strain ATCC 25905 / DSM 1728 / JCM 9062 / NBRC 15155 / AMRC-C165).